A 189-amino-acid chain; its full sequence is uncharacterized protein (189 aa).

An N-terminal signal peptide occupies residues 1 to 20 (MKFSTVGFLFSTILFKSAFA). The EF-hand domain occupies 74-109 (KKNEVLVDVLKKCDPSGNRRITLDEFLAFRKNGGEL). Ca(2+) contacts are provided by D87, S89, N91, R93, and E98.

It is found in the endoplasmic reticulum lumen. The protein localises to the golgi apparatus lumen. This is an uncharacterized protein from Schizosaccharomyces pombe (strain 972 / ATCC 24843) (Fission yeast).